We begin with the raw amino-acid sequence, 711 residues long: GDNF-inducible zinc finger protein 1 (711 aa).

The 73-residue stretch at 31 to 103 (CDVTVSVEYQ…VYTAKVQVEE (73 aa)) folds into the BTB domain. Over residues 153 to 168 (SGSQVSAAPAPRASVA) the composition is skewed to low complexity. Disordered regions lie at residues 153-220 (SGSQ…PKIR) and 243-312 (RLRE…EGEK). Composition is skewed to basic and acidic residues over residues 197–212 (PPKK…KEVV), 243–252 (RLREQQKTAE), and 265–277 (SPDR…EQVS). Residues 298–309 (EEEEEEEEEDEE) show a composition bias toward acidic residues. 10 consecutive C2H2-type zinc fingers follow at residues 317 to 340 (FKCS…KHRH), 348 to 371 (YRCD…RHVH), 377 to 400 (FPCE…LQVH), 407 to 429 (HRCG…ERTH), 435 to 457 (YGCT…MRIH), 463 to 485 (FVCD…KRCH), 491 to 513 (FMCE…NRIH), 519 to 541 (FKCE…IKVH), 547 to 569 (YCCD…RRIH), and 575 to 597 (FMCN…TSIH). Ser-613 carries the post-translational modification Phosphoserine.

This sequence belongs to the krueppel C2H2-type zinc-finger protein family. In terms of assembly, interacts with NCL. As to expression, expressed in adult brain, heart, skeletal muscle, kidney and liver. Also detected in fetal brain and kidney, and at lower levels in fetal lung and liver.

It localises to the cytoplasm. The protein resides in the nucleus. Its subcellular location is the nucleoplasm. It is found in the nucleolus. Its function is as follows. Transcriptional repressor that binds the GZF1 responsive element (GRE) (consensus: 5'-TGCGCN[TG][CA]TATA-3'). May be regulating VSX2/HOX10 expression. This chain is GDNF-inducible zinc finger protein 1, found in Homo sapiens (Human).